The primary structure comprises 306 residues: Putative S-adenosyl-L-methionine-dependent methyltransferase MAV_4442 (306 aa).

S-adenosyl-L-methionine is bound by residues Asp129 and 158–159; that span reads DL.

This sequence belongs to the UPF0677 family.

Exhibits S-adenosyl-L-methionine-dependent methyltransferase activity. The protein is Putative S-adenosyl-L-methionine-dependent methyltransferase MAV_4442 of Mycobacterium avium (strain 104).